A 954-amino-acid chain; its full sequence is Isoleucine--tRNA ligase (954 aa).

Residues 60 to 70 (PYANGALHMGH) carry the 'HIGH' region motif. Residue Glu-564 participates in L-isoleucyl-5'-AMP binding. The 'KMSKS' region motif lies at 605–609 (KMSKS). Residue Lys-608 participates in ATP binding. The Zn(2+) site is built by Cys-923, Cys-926, Cys-943, and Cys-946.

The protein belongs to the class-I aminoacyl-tRNA synthetase family. IleS type 1 subfamily. In terms of assembly, monomer. The cofactor is Zn(2+).

It localises to the cytoplasm. It carries out the reaction tRNA(Ile) + L-isoleucine + ATP = L-isoleucyl-tRNA(Ile) + AMP + diphosphate. Functionally, catalyzes the attachment of isoleucine to tRNA(Ile). As IleRS can inadvertently accommodate and process structurally similar amino acids such as valine, to avoid such errors it has two additional distinct tRNA(Ile)-dependent editing activities. One activity is designated as 'pretransfer' editing and involves the hydrolysis of activated Val-AMP. The other activity is designated 'posttransfer' editing and involves deacylation of mischarged Val-tRNA(Ile). This Synechococcus sp. (strain ATCC 27144 / PCC 6301 / SAUG 1402/1) (Anacystis nidulans) protein is Isoleucine--tRNA ligase.